The chain runs to 238 residues: DNA repair protein RecO (238 aa).

This sequence belongs to the RecO family.

Its function is as follows. Involved in DNA repair and RecF pathway recombination. The chain is DNA repair protein RecO from Aliivibrio salmonicida (strain LFI1238) (Vibrio salmonicida (strain LFI1238)).